A 385-amino-acid chain; its full sequence is 8-amino-7-oxononanoate synthase (385 aa).

Residue R27 coordinates substrate. 105 to 106 (GY) serves as a coordination point for pyridoxal 5'-phosphate. Residue H130 coordinates substrate. Pyridoxal 5'-phosphate is bound by residues S176, 201–204 (DEAH), and 232–235 (TMSK). Position 235 is an N6-(pyridoxal phosphate)lysine (K235). T345 serves as a coordination point for substrate.

Belongs to the class-II pyridoxal-phosphate-dependent aminotransferase family. BioF subfamily. As to quaternary structure, homodimer. The cofactor is pyridoxal 5'-phosphate.

The enzyme catalyses 6-carboxyhexanoyl-[ACP] + L-alanine + H(+) = (8S)-8-amino-7-oxononanoate + holo-[ACP] + CO2. It functions in the pathway cofactor biosynthesis; biotin biosynthesis. Functionally, catalyzes the decarboxylative condensation of pimeloyl-[acyl-carrier protein] and L-alanine to produce 8-amino-7-oxononanoate (AON), [acyl-carrier protein], and carbon dioxide. This Mycobacterium leprae (strain Br4923) protein is 8-amino-7-oxononanoate synthase.